Consider the following 233-residue polypeptide: ATP synthase subunit a, chloroplastic (233 aa).

4 consecutive transmembrane segments (helical) span residues 27-47, 84-104, 122-142, and 192-212; these read VLLI…LGTL, VPFV…GALI, DINT…YAGF, and VLCL…GIFA.

This sequence belongs to the ATPase A chain family. In terms of assembly, F-type ATPases have 2 components, CF(1) - the catalytic core - and CF(0) - the membrane proton channel. CF(1) has five subunits: alpha(3), beta(3), gamma(1), delta(1), epsilon(1). CF(0) has four main subunits: a, b, b' and c.

It localises to the plastid. It is found in the chloroplast thylakoid membrane. In terms of biological role, key component of the proton channel; it plays a direct role in the translocation of protons across the membrane. This Ochrosphaera neapolitana protein is ATP synthase subunit a, chloroplastic.